The primary structure comprises 178 residues: Adenine phosphoribosyltransferase (178 aa).

The protein belongs to the purine/pyrimidine phosphoribosyltransferase family. In terms of assembly, homodimer.

It localises to the cytoplasm. It catalyses the reaction AMP + diphosphate = 5-phospho-alpha-D-ribose 1-diphosphate + adenine. The protein operates within purine metabolism; AMP biosynthesis via salvage pathway; AMP from adenine: step 1/1. Functionally, catalyzes a salvage reaction resulting in the formation of AMP, that is energically less costly than de novo synthesis. The chain is Adenine phosphoribosyltransferase from Cereibacter sphaeroides (strain ATCC 17023 / DSM 158 / JCM 6121 / CCUG 31486 / LMG 2827 / NBRC 12203 / NCIMB 8253 / ATH 2.4.1.) (Rhodobacter sphaeroides).